Reading from the N-terminus, the 235-residue chain is Small ribosomal subunit protein uS2 (235 aa).

Belongs to the universal ribosomal protein uS2 family.

The sequence is that of Small ribosomal subunit protein uS2 from Caldanaerobacter subterraneus subsp. tengcongensis (strain DSM 15242 / JCM 11007 / NBRC 100824 / MB4) (Thermoanaerobacter tengcongensis).